Reading from the N-terminus, the 187-residue chain is Holliday junction resolvase (187 aa).

Belongs to the RuvC family. Poxviruses-type subfamily. The cofactor is Mg(2+). In terms of processing, acylated by palmitic acid group(s).

The protein localises to the membrane. Nuclease that specifically cleaves and resolves four-way DNA Holliday junctions into linear duplex products. This chain is Holliday junction resolvase, found in Vaccinia virus (strain Ankara) (VACV).